A 389-amino-acid polypeptide reads, in one-letter code: Teichoic acid ribitol-phosphate primase (389 aa).

This sequence belongs to the CDP-glycerol glycerophosphotransferase family.

It is found in the cell membrane. It carries out the reaction 4-O-[(2R)-glycerylphospho]-N-acetyl-beta-D-mannosaminyl-(1-&gt;4)-N-acetyl-alpha-D-glucosaminyl di-trans,octa-cis-undecaprenyl diphosphate + CDP-L-ribitol = 4-O-[1-D-ribitylphospho-(2R)-1-glycerylphospho]-N-acetyl-beta-D-mannosaminyl-(1-&gt;4)-N-acetyl-alpha-D-glucosaminyl di-trans,octa-cis-undecaprenyl diphosphate + CMP + H(+). It functions in the pathway cell wall biogenesis; poly(ribitol phosphate) teichoic acid biosynthesis. In terms of biological role, catalyzes the addition of a single ribitol phosphate unit onto the glycerol phosphate of the linkage unit, as a primer for polymerisation by TarL. This chain is Teichoic acid ribitol-phosphate primase (tarK), found in Bacillus spizizenii (strain ATCC 23059 / NRRL B-14472 / W23) (Bacillus subtilis subsp. spizizenii).